The following is a 546-amino-acid chain: Protein phosphatase 1G (546 aa).

The N-myristoyl glycine moiety is linked to residue G2. R22 is subject to Omega-N-methylarginine. Positions 26-505 (PYGFSAMQGW…DNMTCIIICF (480 aa)) constitute a PPM-type phosphatase domain. The Mn(2+) site is built by D60 and G61. 2 disordered regions span residues 116 to 139 (QIAGRPTEDEDEKEKVADEDDVDN) and 161 to 328 (GQNC…SDSG). Position 122 is a phosphothreonine (T122). The span at 123 to 139 (EDEDEKEKVADEDDVDN) shows a compositional bias: acidic residues. Position 183 is a phosphoserine (S183). Positions 259–312 (DSEDESDEAEEEEEDSEECSEEEDGYSSEEAENEEDEDDTEEAEEDDEEEEEEM) are enriched in acidic residues. At K383 the chain carries N6-acetyllysine. Residues D441 and D496 each contribute to the Mn(2+) site. The segment at 512 to 546 (ELQPESGKRKLEEVLSTEGAEENGNSDKKKKAKRD) is disordered. S527 is subject to Phosphoserine.

It belongs to the PP2C family. Interacts with NOL3; may dephosphorylate NOL3. Mg(2+) is required as a cofactor. The cofactor is Mn(2+). Widely expressed. Most abundant in testis, skeletal muscle, and heart.

The protein localises to the cytoplasm. The protein resides in the membrane. It carries out the reaction O-phospho-L-seryl-[protein] + H2O = L-seryl-[protein] + phosphate. The catalysed reaction is O-phospho-L-threonyl-[protein] + H2O = L-threonyl-[protein] + phosphate. The protein is Protein phosphatase 1G (PPM1G) of Homo sapiens (Human).